A 73-amino-acid chain; its full sequence is Large ribosomal subunit protein bL31 (73 aa).

It belongs to the bacterial ribosomal protein bL31 family. Type A subfamily. Part of the 50S ribosomal subunit.

Functionally, binds the 23S rRNA. The chain is Large ribosomal subunit protein bL31 from Rhizobium meliloti (strain 1021) (Ensifer meliloti).